The sequence spans 265 residues: Nitrogenase vanadium-iron protein alpha chain (265 aa).

Residues C17 and C80 each coordinate [8Fe-7S] cluster. C199 is a binding site for [7Fe-V-9S-C-homocitryl] cluster.

The protein belongs to the NifD/NifK/NifE/NifN family. Hexamer of two alpha, two beta, and two delta chains. Requires [8Fe-7S] cluster as cofactor. It depends on [7Fe-V-9S-C-homocitryl] cluster as a cofactor.

The enzyme catalyses N2 + 8 reduced [2Fe-2S]-[ferredoxin] + 16 ATP + 16 H2O = H2 + 8 oxidized [2Fe-2S]-[ferredoxin] + 2 NH4(+) + 16 ADP + 16 phosphate + 6 H(+). This vanadium-iron protein is part of the nitrogenase complex that catalyzes the key enzymatic reactions in nitrogen fixation. This is Nitrogenase vanadium-iron protein alpha chain (vnfD) from Azorhizophilus paspali (Azotobacter paspali).